The chain runs to 311 residues: MQACTLIARAKINLYLEILGSRPDGYSEVAMVLQSIHLADRLQLKSRPHGIHLTCDRPEVPTDARNLAYQAAELLQKECHSAAGVEIHIEKHIPVAAGLAGGSADAAAVLVGLNQLWGLGLTVGELQSLAARLGSDIPFCIQGGTQLATGRGEVLEPLADWEGIPVLLAKPKHLGVSTAWAYQAFRSRREILGATAPSEPALPTLPQALAALSRQDPPALARSLRNDLEQVVLPEYAIVGELRQALLSAGALGSLMSGSGPTVFGIMPSLELAAQARDTLRRQFQDVEFWVTQFAPTGILLQPDPCSLSPS.

Lys-11 is a catalytic residue. An ATP-binding site is contributed by 94–104 (PVAAGLAGGSA). Asp-136 is an active-site residue.

Belongs to the GHMP kinase family. IspE subfamily.

The catalysed reaction is 4-CDP-2-C-methyl-D-erythritol + ATP = 4-CDP-2-C-methyl-D-erythritol 2-phosphate + ADP + H(+). It functions in the pathway isoprenoid biosynthesis; isopentenyl diphosphate biosynthesis via DXP pathway; isopentenyl diphosphate from 1-deoxy-D-xylulose 5-phosphate: step 3/6. Functionally, catalyzes the phosphorylation of the position 2 hydroxy group of 4-diphosphocytidyl-2C-methyl-D-erythritol. The chain is 4-diphosphocytidyl-2-C-methyl-D-erythritol kinase from Synechococcus sp. (strain JA-2-3B'a(2-13)) (Cyanobacteria bacterium Yellowstone B-Prime).